A 402-amino-acid chain; its full sequence is D-mannonate dehydratase (402 aa).

Residues N37 and H122 each coordinate substrate. The active-site Proton donor/acceptor is the Y159. D210 is a binding site for Mg(2+). The active-site Proton donor/acceptor is the H212. The Mg(2+) site is built by E236 and E262. Substrate contacts are provided by E262, R283, H312, D316, and E339.

Belongs to the mandelate racemase/muconate lactonizing enzyme family. GalD subfamily. Homotetramer. The cofactor is Mg(2+).

The enzyme catalyses D-mannonate = 2-dehydro-3-deoxy-D-gluconate + H2O. The protein operates within carbohydrate metabolism; pentose and glucuronate interconversion. Functionally, catalyzes the dehydration of D-mannonate. Has no detectable activity with a panel of 70 other acid sugars (in vitro). In Novosphingobium aromaticivorans (strain ATCC 700278 / DSM 12444 / CCUG 56034 / CIP 105152 / NBRC 16084 / F199), this protein is D-mannonate dehydratase (manD).